A 257-amino-acid chain; its full sequence is DNA repair protein RecO (257 aa).

This sequence belongs to the RecO family.

Functionally, involved in DNA repair and RecF pathway recombination. This is DNA repair protein RecO from Streptococcus thermophilus (strain ATCC BAA-491 / LMD-9).